Reading from the N-terminus, the 407-residue chain is MPLNIIGTALLDGTDKIPYYQTIKKVAPYVLATGAIKYWSRGPSNTWERKLHGKVYLVTGATSQGMGTSVAYKMAELGAQLIILTREVDEWVTEWCEELREKTKNELIFVEKCDLSNLWEIRKFATSWLDNSPPRRLDGVIVMSGDMEPWGIPKISLPQRRSSKDGLELQIATNYVAIFHLLNLLQPSFKAQPPDRDVRIILATCWLQVVGDINIEDPLWQNAKYKSALKFFASSKLQLGLSMMELQRRLTEDIKNQKTNGAERTGKNVTITMVQPGTMRSNSLRRVISNGSVVLLIILYCILLYPILWLFTKSGRRGDQSFLYALMTPELEEVNLKDTKVKYISDCSIVKFARKEFDDEELQKKLFDNTERDILQLEKKVAAKRNANKTGNQNSKKKSQNKSRKDD.

Residues 1 to 290 (MPLNIIGTAL…SNSLRRVISN (290 aa)) are Lumenal-facing. Residues Asp114, Lys236, and Ser281 each coordinate NADP(+). Lys236 acts as the Lowers pKa of active site Tyr in catalysis. A helical membrane pass occupies residues 291–311 (GSVVLLIILYCILLYPILWLF). Residues 312–407 (TKSGRRGDQS…KSQNKSRKDD (96 aa)) are Cytoplasmic-facing. The stretch at 361 to 390 (ELQKKLFDNTERDILQLEKKVAAKRNANKT) forms a coiled coil. Residues 383 to 407 (AKRNANKTGNQNSKKKSQNKSRKDD) are disordered. Over residues 395-407 (SKKKSQNKSRKDD) the composition is skewed to basic residues.

It belongs to the short-chain dehydrogenases/reductases (SDR) family.

Its subcellular location is the endoplasmic reticulum membrane. In terms of biological role, may be involved in lipid metabolism. This is an uncharacterized protein from Saccharomyces cerevisiae (strain ATCC 204508 / S288c) (Baker's yeast).